The following is a 501-amino-acid chain: Glycerol kinase 1 (501 aa).

ADP is bound at residue Thr16. 3 residues coordinate ATP: Thr16, Thr17, and Ser18. Thr16 is a sn-glycerol 3-phosphate binding site. Position 20 (Arg20) interacts with ADP. Residues Arg84, Glu85, Tyr135, and Asp242 each contribute to the sn-glycerol 3-phosphate site. The glycerol site is built by Arg84, Glu85, Tyr135, Asp242, and Gln243. ADP-binding residues include Thr264 and Gly307. Residues Thr264, Gly307, Gln311, and Gly408 each coordinate ATP. Gly408 contacts ADP.

Belongs to the FGGY kinase family.

The enzyme catalyses glycerol + ATP = sn-glycerol 3-phosphate + ADP + H(+). It participates in polyol metabolism; glycerol degradation via glycerol kinase pathway; sn-glycerol 3-phosphate from glycerol: step 1/1. Key enzyme in the regulation of glycerol uptake and metabolism. Catalyzes the phosphorylation of glycerol to yield sn-glycerol 3-phosphate. The polypeptide is Glycerol kinase 1 (Saccharolobus solfataricus (strain ATCC 35092 / DSM 1617 / JCM 11322 / P2) (Sulfolobus solfataricus)).